The chain runs to 310 residues: Oxygen-dependent coproporphyrinogen-III oxidase (310 aa).

Position 92 (Ser92) interacts with substrate. A divalent metal cation-binding residues include His96 and His106. His106 serves as the catalytic Proton donor. 108 to 110 (NVR) provides a ligand contact to substrate. Residues His145 and His175 each coordinate a divalent metal cation. The interval 240–275 (YVEFNLIWDRGTLFGLQSGGRTESILMSMPPLARWE) is important for dimerization. 258-260 (GGR) serves as a coordination point for substrate.

Belongs to the aerobic coproporphyrinogen-III oxidase family. Homodimer. A divalent metal cation is required as a cofactor.

It localises to the cytoplasm. It carries out the reaction coproporphyrinogen III + O2 + 2 H(+) = protoporphyrinogen IX + 2 CO2 + 2 H2O. It functions in the pathway porphyrin-containing compound metabolism; protoporphyrin-IX biosynthesis; protoporphyrinogen-IX from coproporphyrinogen-III (O2 route): step 1/1. Its function is as follows. Involved in the heme biosynthesis. Catalyzes the aerobic oxidative decarboxylation of propionate groups of rings A and B of coproporphyrinogen-III to yield the vinyl groups in protoporphyrinogen-IX. This is Oxygen-dependent coproporphyrinogen-III oxidase from Pectobacterium carotovorum subsp. carotovorum (strain PC1).